The following is a 953-amino-acid chain: Zinc finger protein 618 (953 aa).

Position 1 is an N-acetylmethionine (Met1). The disordered stretch occupies residues 1–56; it reads MSQPDGAAAPQVDGASAPGRKSAVNRERLKRSQKSSKVEGPEPVPAEASLSAEQGT. Glycyl lysine isopeptide (Lys-Gly) (interchain with G-Cter in SUMO2) cross-links involve residues Lys63 and Lys81. C2H2-type zinc fingers lie at residues 146 to 168 and 187 to 209; these read YECG…VRAH and YTCD…RDLH. Lys238 participates in a covalent cross-link: Glycyl lysine isopeptide (Lys-Gly) (interchain with G-Cter in SUMO2). Residues 255-277 form a C2H2-type 3 zinc finger; it reads YTCEFCGKQYKYYTPYQEHVALH. Disordered stretches follow at residues 283 to 305 and 337 to 390; these read APGW…EVTP and TPPA…SSEP. A compositionally biased stretch (polar residues) spans 339 to 354; sequence PATQTQTFRAPNSGSP. Basic and acidic residues predominate over residues 365–379; sequence FSRRVESKAQNHFEE. Residues 391–413 form a C2H2-type 4 zinc finger; that stretch reads YTCGACGIQFQFYSNLLEHMQSH. A compositionally biased stretch (polar residues) spans 419–428; sequence NNITSNQSRS. Positions 419–461 are disordered; it reads NNITSNQSRSPPAAVEEKWKPQAQRNSANNTTTSGLTPNSVIP. A Glycyl lysine isopeptide (Lys-Gly) (interchain with G-Cter in SUMO2) cross-link involves residue Lys436. Over residues 441–458 the composition is skewed to polar residues; it reads AQRNSANNTTTSGLTPNS.

Belongs to the krueppel C2H2-type zinc-finger protein family. In terms of assembly, interacts with UHRF2.

The protein resides in the nucleus. It is found in the chromosome. Regulates UHRF2 function as a specific 5-hydroxymethylcytosine (5hmC) reader by regulating its chromatin localization. The polypeptide is Zinc finger protein 618 (Znf618) (Mus musculus (Mouse)).